The sequence spans 577 residues: Beta-glucosidase 30 (577 aa).

Residues 1–23 form the signal peptide; it reads MAKGSWFFIILFIISMLENMINS. A beta-D-glucoside contacts are provided by residues Gln-45, His-148, and 193–194; that span reads NE. The Proton donor role is filled by Glu-194. Cys-213 and Cys-221 are oxidised to a cystine. Asn-328 carries N-linked (GlcNAc...) asparagine glycosylation. Tyr-338 serves as a coordination point for a beta-D-glucoside. Asn-368 carries an N-linked (GlcNAc...) asparagine glycan. A beta-D-glucoside-binding positions include Glu-410, Trp-460, 467–468, and Phe-476; that span reads EW. The Nucleophile role is filled by Glu-410. N-linked (GlcNAc...) asparagine glycans are attached at residues Asn-524 and Asn-544.

The protein belongs to the glycosyl hydrolase 1 family.

It carries out the reaction Hydrolysis of terminal, non-reducing beta-D-glucosyl residues with release of beta-D-glucose.. The polypeptide is Beta-glucosidase 30 (Arabidopsis thaliana (Mouse-ear cress)).